The following is a 113-amino-acid chain: Hydrogenase maturation factor HybF (113 aa).

Ni(2+) is bound by residues His2 and Glu3. Cys73, Cys76, Cys89, and Cys92 together coordinate Zn(2+).

This sequence belongs to the HypA/HybF family. HybF subfamily. As to quaternary structure, monomer.

In terms of biological role, involved in the maturation of [NiFe] hydrogenases. Required for nickel insertion into the metal center of the hydrogenase. HybF is involved in maturation of hydrogenases 1 and 2. It may partially substitute for the function of HypA and vice versa. The sequence is that of Hydrogenase maturation factor HybF from Escherichia coli (strain K12).